The following is a 445-amino-acid chain: Methylenetetrahydrofolate--tRNA-(uracil-5-)-methyltransferase TrmFO (445 aa).

9-14 (GGGLAG) contributes to the FAD binding site.

This sequence belongs to the MnmG family. TrmFO subfamily. FAD is required as a cofactor.

The protein localises to the cytoplasm. It catalyses the reaction uridine(54) in tRNA + (6R)-5,10-methylene-5,6,7,8-tetrahydrofolate + NADH + H(+) = 5-methyluridine(54) in tRNA + (6S)-5,6,7,8-tetrahydrofolate + NAD(+). The enzyme catalyses uridine(54) in tRNA + (6R)-5,10-methylene-5,6,7,8-tetrahydrofolate + NADPH + H(+) = 5-methyluridine(54) in tRNA + (6S)-5,6,7,8-tetrahydrofolate + NADP(+). Its function is as follows. Catalyzes the folate-dependent formation of 5-methyl-uridine at position 54 (M-5-U54) in all tRNAs. In Rhizorhabdus wittichii (strain DSM 6014 / CCUG 31198 / JCM 15750 / NBRC 105917 / EY 4224 / RW1) (Sphingomonas wittichii), this protein is Methylenetetrahydrofolate--tRNA-(uracil-5-)-methyltransferase TrmFO.